Consider the following 413-residue polypeptide: Phosphopentomutase (413 aa).

Mn(2+) is bound by residues D11, D306, H311, D347, H348, and H359.

It belongs to the phosphopentomutase family. Requires Mn(2+) as cofactor.

The protein localises to the cytoplasm. It carries out the reaction 2-deoxy-alpha-D-ribose 1-phosphate = 2-deoxy-D-ribose 5-phosphate. It catalyses the reaction alpha-D-ribose 1-phosphate = D-ribose 5-phosphate. Its pathway is carbohydrate degradation; 2-deoxy-D-ribose 1-phosphate degradation; D-glyceraldehyde 3-phosphate and acetaldehyde from 2-deoxy-alpha-D-ribose 1-phosphate: step 1/2. Its function is as follows. Isomerase that catalyzes the conversion of deoxy-ribose 1-phosphate (dRib-1-P) and ribose 1-phosphate (Rib-1-P) to deoxy-ribose 5-phosphate (dRib-5-P) and ribose 5-phosphate (Rib-5-P), respectively. This Helicobacter acinonychis (strain Sheeba) protein is Phosphopentomutase.